Reading from the N-terminus, the 729-residue chain is Fatty acid oxidation complex subunit alpha (729 aa).

The interval 1–189 (MLYKGDTLYL…KIGLVDGVVK (189 aa)) is enoyl-CoA hydratase/isomerase. Aspartate 296 contributes to the substrate binding site. Residues 311 to 729 (ETPKQAAVLG…ARPVGSLKTA (419 aa)) are 3-hydroxyacyl-CoA dehydrogenase. Residues methionine 324, aspartate 343, 400-402 (VVE), lysine 407, and serine 429 each bind NAD(+). Catalysis depends on histidine 450, which acts as the For 3-hydroxyacyl-CoA dehydrogenase activity. Asparagine 453 serves as a coordination point for NAD(+). Positions 500 and 660 each coordinate substrate. The disordered stretch occupies residues 708-729 (RHNEPYYPPVEPARPVGSLKTA).

The protein in the N-terminal section; belongs to the enoyl-CoA hydratase/isomerase family. In the C-terminal section; belongs to the 3-hydroxyacyl-CoA dehydrogenase family. In terms of assembly, heterotetramer of two alpha chains (FadB) and two beta chains (FadA).

The enzyme catalyses a (3S)-3-hydroxyacyl-CoA + NAD(+) = a 3-oxoacyl-CoA + NADH + H(+). The catalysed reaction is a (3S)-3-hydroxyacyl-CoA = a (2E)-enoyl-CoA + H2O. It catalyses the reaction a 4-saturated-(3S)-3-hydroxyacyl-CoA = a (3E)-enoyl-CoA + H2O. It carries out the reaction (3S)-3-hydroxybutanoyl-CoA = (3R)-3-hydroxybutanoyl-CoA. The enzyme catalyses a (3Z)-enoyl-CoA = a 4-saturated (2E)-enoyl-CoA. The catalysed reaction is a (3E)-enoyl-CoA = a 4-saturated (2E)-enoyl-CoA. Its pathway is lipid metabolism; fatty acid beta-oxidation. Involved in the aerobic and anaerobic degradation of long-chain fatty acids via beta-oxidation cycle. Catalyzes the formation of 3-oxoacyl-CoA from enoyl-CoA via L-3-hydroxyacyl-CoA. It can also use D-3-hydroxyacyl-CoA and cis-3-enoyl-CoA as substrate. The chain is Fatty acid oxidation complex subunit alpha from Salmonella enteritidis PT4 (strain P125109).